We begin with the raw amino-acid sequence, 357 residues long: Isopenicillin-N N-acyltransferase (357 aa).

The 6-aminopenicillanate site is built by Asp121 and Arg310.

The protein belongs to the peptidase C45 family. The active form of the enzyme results from processing of the 40-kDa monomeric precursor to a heterodimer containing subunits of 11 and 29 kDa. Post-translationally, the pre-AAT protein is synthesized as 40 kDa precursor which is then self-processed into an 11 kDa (protein A) and a 29 kDa (protein B). The B protein carries AAT activity.

The protein resides in the peroxisome matrix. It catalyses the reaction isopenicillin N + phenylacetyl-CoA + H2O = penicillin G + L-2-aminoadipate + CoA + H(+). It functions in the pathway antibiotic biosynthesis; penicillin G biosynthesis; penicillin G from L-alpha-aminoadipate and L-cysteine and L-valine: step 3/3. Isopenicillin-N N-acyltransferase; part of the gene cluster that mediates the biosynthesis of penicillin, the world's most important antibiotic. AatA catalyzes the exchange of the alpha-aminoadipyl side chain of isopenicillin N for phenylacetic acid to yield penicillin. This step occurs in the peroxisomal matrix and the penM and paaT transporters are involved in the isopenicillin N and phenylacetic acid import into the peroxisome, respectively. The penicillin biosynthesis occurs via 3 enzymatic steps, the first corresponding to the production of the tripeptide N-[(5S)-5-amino-5-carboxypentanoyl]-L-cysteinyl-D-valine (LLD-ACV or ACV) by the NRPS acvA. The tripeptide ACV is then cyclized to isopenicillin N (IPN) by the isopenicillin N synthase ipnA that forms the beta-lactam nucleus. Finally, the alpha-aminoadipyl side chain is exchanged for phenylacetic acid by the isopenicillin N acyltransferase aatA to yield penicillin in the peroxisomal matrix. This Penicillium chrysogenum (Penicillium notatum) protein is Isopenicillin-N N-acyltransferase.